The chain runs to 110 residues: Late cornified envelope protein 2D (110 aa).

This sequence belongs to the LCE family. In terms of tissue distribution, skin-specific. Expression was readily detected in adult trunk skin, adult arm skin, fetal skin, penal skin, vulva, esophagus and tongue. Not expressed in the cervix, rectum, lung, colon, or placenta.

Its function is as follows. Precursors of the cornified envelope of the stratum corneum. The chain is Late cornified envelope protein 2D (LCE2D) from Homo sapiens (Human).